The following is a 326-amino-acid chain: Adenosine receptor A1 (326 aa).

Residues 1-10 (MPPYISAFQA) lie on the Extracellular side of the membrane. Residues 11–33 (AYIGIEVLIALVSVPGNVLVIWA) traverse the membrane as a helical segment. The Cytoplasmic portion of the chain corresponds to 34–46 (VKVNQALRDATFC). Residues 47-69 (FIVSLAVADVAVGALVIPLAILI) form a helical membrane-spanning segment. Over 70 to 80 (NIGPQTYFHTC) the chain is Extracellular. A disulfide bridge connects residues Cys-80 and Cys-169. A helical transmembrane segment spans residues 81-102 (LMVACPVLILTQSSILALLAIA). The Cytoplasmic portion of the chain corresponds to 103-123 (VDRYLRVKIPLRYKTVVTQRR). A helical membrane pass occupies residues 124-146 (AAVAIAGCWILSLVVGLTPMFGW). The Extracellular portion of the chain corresponds to 147-176 (NNLSEVEQAWIANGSVGEPVIKCEFEKVIS). Residues Asn-148 and Asn-159 are each glycosylated (N-linked (GlcNAc...) asparagine). The helical transmembrane segment at 177–201 (MEYMVYFNFFVWVLPPLLLMVLIYL) threads the bilayer. The Cytoplasmic segment spans residues 202–235 (EVFYLIRKQLNKKVSASSGDPQKYYGKELKIAKS). A helical membrane pass occupies residues 236-259 (LALILFLFALSWLPLHILNCITLF). Topologically, residues 260 to 267 (CPTCQKPS) are extracellular. Residues 268–292 (ILIYIAIFLTHGNSAMNPIVYAFRI) traverse the membrane as a helical segment. At 293–326 (HKFRVTFLKIWNDHFRCQPKPPIEEDIPEEKADD) the chain is on the cytoplasmic side. Cys-309 is lipidated: S-palmitoyl cysteine.

The protein belongs to the G-protein coupled receptor 1 family.

It localises to the cell membrane. Functionally, receptor for adenosine. The activity of this receptor is mediated by G proteins which inhibit adenylyl cyclase. In Mus musculus (Mouse), this protein is Adenosine receptor A1 (Adora1).